We begin with the raw amino-acid sequence, 354 residues long: DNA polymerase IV (354 aa).

Positions 3-188 (VIFVDFDYFF…LDIDEIPGIG (186 aa)) constitute a UmuC domain. Mg(2+)-binding residues include Asp7 and Asp105. Glu106 is an active-site residue.

It belongs to the DNA polymerase type-Y family. In terms of assembly, monomer. It depends on Mg(2+) as a cofactor.

It localises to the cytoplasm. It catalyses the reaction DNA(n) + a 2'-deoxyribonucleoside 5'-triphosphate = DNA(n+1) + diphosphate. Functionally, poorly processive, error-prone DNA polymerase involved in untargeted mutagenesis. Copies undamaged DNA at stalled replication forks, which arise in vivo from mismatched or misaligned primer ends. These misaligned primers can be extended by PolIV. Exhibits no 3'-5' exonuclease (proofreading) activity. May be involved in translesional synthesis. The polypeptide is DNA polymerase IV (Sulfolobus acidocaldarius (strain ATCC 33909 / DSM 639 / JCM 8929 / NBRC 15157 / NCIMB 11770)).